The following is a 161-amino-acid chain: Peptidyl-prolyl cis-trans isomerase (161 aa).

One can recognise a PPIase cyclophilin-type domain in the interval 6–160 (FFDIKAGDER…KKIIIEDCGE (155 aa)).

This sequence belongs to the cyclophilin-type PPIase family. PPIase A subfamily. In terms of tissue distribution, found mainly in the tegument, gut epithelium, and muscle layers. Also found in the interior of the parasite.

The catalysed reaction is [protein]-peptidylproline (omega=180) = [protein]-peptidylproline (omega=0). With respect to regulation, binds cyclosporin A (CsA). CsA mediates some of its effects via an inhibitory action on PPIase. Functionally, PPIases accelerate the folding of proteins. It catalyzes the cis-trans isomerization of proline imidic peptide bonds in oligopeptides. This is Peptidyl-prolyl cis-trans isomerase from Schistosoma mansoni (Blood fluke).